A 222-amino-acid polypeptide reads, in one-letter code: UPF0758 protein Cpar_0627 (222 aa).

The region spanning 100–222 (KIQGAQDVFE…WFSFRDHSLL (123 aa)) is the MPN domain. Residues H171, H173, and D184 each coordinate Zn(2+). A JAMM motif motif is present at residues 171-184 (HNHPSGDVQPSNAD).

The protein belongs to the UPF0758 family.

The chain is UPF0758 protein Cpar_0627 from Chlorobaculum parvum (strain DSM 263 / NCIMB 8327) (Chlorobium vibrioforme subsp. thiosulfatophilum).